A 423-amino-acid polypeptide reads, in one-letter code: Gamma-glutamyl phosphate reductase (423 aa).

Belongs to the gamma-glutamyl phosphate reductase family.

It is found in the cytoplasm. The enzyme catalyses L-glutamate 5-semialdehyde + phosphate + NADP(+) = L-glutamyl 5-phosphate + NADPH + H(+). Its pathway is amino-acid biosynthesis; L-proline biosynthesis; L-glutamate 5-semialdehyde from L-glutamate: step 2/2. Functionally, catalyzes the NADPH-dependent reduction of L-glutamate 5-phosphate into L-glutamate 5-semialdehyde and phosphate. The product spontaneously undergoes cyclization to form 1-pyrroline-5-carboxylate. This Pseudomonas putida (strain GB-1) protein is Gamma-glutamyl phosphate reductase.